Reading from the N-terminus, the 496-residue chain is Pup--protein ligase (496 aa).

Glu-30 is a binding site for Mg(2+). Arg-73 is an ATP binding site. Tyr-75 is a binding site for Mg(2+). Asp-77 (proton acceptor) is an active-site residue. Residue Glu-83 participates in Mg(2+) binding. ATP is bound by residues Thr-86 and Trp-450.

Belongs to the Pup ligase/Pup deamidase family. Pup-conjugating enzyme subfamily.

The enzyme catalyses ATP + [prokaryotic ubiquitin-like protein]-L-glutamate + [protein]-L-lysine = ADP + phosphate + N(6)-([prokaryotic ubiquitin-like protein]-gamma-L-glutamyl)-[protein]-L-lysine.. It participates in protein degradation; proteasomal Pup-dependent pathway. Its pathway is protein modification; protein pupylation. Functionally, catalyzes the covalent attachment of the prokaryotic ubiquitin-like protein modifier Pup to the proteasomal substrate proteins, thereby targeting them for proteasomal degradation. This tagging system is termed pupylation. The ligation reaction involves the side-chain carboxylate of the C-terminal glutamate of Pup and the side-chain amino group of a substrate lysine. This is Pup--protein ligase from Bifidobacterium animalis subsp. lactis (strain AD011).